Here is a 295-residue protein sequence, read N- to C-terminus: Light-independent protochlorophyllide reductase iron-sulfur ATP-binding protein (295 aa).

Residues 10 to 15 and Lys39 contribute to the ATP site; that span reads GIGKST. Ser14 serves as a coordination point for Mg(2+). Cys95 and Cys129 together coordinate [4Fe-4S] cluster. Residue 180-181 participates in ATP binding; it reads NR. Residues 275–289 are compositionally biased toward basic and acidic residues; that stretch reads TKDKKENKKEDKENS. The interval 275 to 295 is disordered; it reads TKDKKENKKEDKENSADFTWL.

The protein belongs to the NifH/BchL/ChlL family. Homodimer. Protochlorophyllide reductase is composed of three subunits; ChlL, ChlN and ChlB. It depends on [4Fe-4S] cluster as a cofactor.

The protein localises to the plastid. It is found in the chloroplast. The catalysed reaction is chlorophyllide a + oxidized 2[4Fe-4S]-[ferredoxin] + 2 ADP + 2 phosphate = protochlorophyllide a + reduced 2[4Fe-4S]-[ferredoxin] + 2 ATP + 2 H2O. The protein operates within porphyrin-containing compound metabolism; chlorophyll biosynthesis (light-independent). Component of the dark-operative protochlorophyllide reductase (DPOR) that uses Mg-ATP and reduced ferredoxin to reduce ring D of protochlorophyllide (Pchlide) to form chlorophyllide a (Chlide). This reaction is light-independent. The L component serves as a unique electron donor to the NB-component of the complex, and binds Mg-ATP. This Physcomitrium patens (Spreading-leaved earth moss) protein is Light-independent protochlorophyllide reductase iron-sulfur ATP-binding protein.